We begin with the raw amino-acid sequence, 152 residues long: Lipoprotein signal peptidase (152 aa).

Helical transmembrane passes span 55-75 and 85-105; these read NKMW…VFYM and LGIS…DRVF. Active-site residues include Asp111 and Asp129. A helical transmembrane segment spans residues 124–144; it reads VFNIADSALCIGVVLIIIQTL.

This sequence belongs to the peptidase A8 family.

The protein localises to the cell membrane. The catalysed reaction is Release of signal peptides from bacterial membrane prolipoproteins. Hydrolyzes -Xaa-Yaa-Zaa-|-(S,diacylglyceryl)Cys-, in which Xaa is hydrophobic (preferably Leu), and Yaa (Ala or Ser) and Zaa (Gly or Ala) have small, neutral side chains.. The protein operates within protein modification; lipoprotein biosynthesis (signal peptide cleavage). Its function is as follows. This protein specifically catalyzes the removal of signal peptides from prolipoproteins. In Bacillus cereus (strain B4264), this protein is Lipoprotein signal peptidase.